Here is a 720-residue protein sequence, read N- to C-terminus: Aminopeptidase RNPEPL1 (720 aa).

321 to 325 (VAMEN) serves as a coordination point for substrate. A Zn(2+)-binding site is contributed by histidine 348. The active-site Proton acceptor is glutamate 349. Residues histidine 352 and glutamate 371 each coordinate Zn(2+). A disordered region spans residues 671–708 (GLGPSAEPSTEPSTDLGGAEADTNPDSPALLLGDEAPS).

Belongs to the peptidase M1 family. Zn(2+) serves as cofactor.

It catalyses the reaction Release of N-terminal amino acids, preferentially methionine, from peptides and arylamides.. Broad specificity aminopeptidase which preferentially hydrolyzes an N-terminal methionine, citrulline or glutamine. The sequence is that of Aminopeptidase RNPEPL1 from Mus musculus (Mouse).